We begin with the raw amino-acid sequence, 31 residues long: Protamine-1B (31 aa).

The tract at residues 1 to 31 (MPRRRRASRRIRRRRRPRVSRRRRRGGRRRR) is disordered.

Testis.

It is found in the nucleus. The protein localises to the chromosome. Functionally, protamines substitute for histones in the chromatin of sperm during the haploid phase of spermatogenesis. They compact sperm DNA into a highly condensed, stable and inactive complex. This is Protamine-1B from Oncorhynchus mykiss (Rainbow trout).